The primary structure comprises 856 residues: Envelope glycoprotein gp160 (856 aa).

Residues 1-32 (MRVKEKYQHLRRWGWRWGTMLLGMLMICSATE) form the signal peptide. Topologically, residues 33-684 (KLWVTVYYGV…ITNWLWYIKI (652 aa)) are extracellular. The cysteines at positions 54 and 74 are disulfide-linked. 18 N-linked (GlcNAc...) asparagine; by host glycosylation sites follow: asparagine 88, asparagine 136, asparagine 141, asparagine 156, asparagine 160, asparagine 186, asparagine 197, asparagine 230, asparagine 234, asparagine 241, asparagine 262, asparagine 276, asparagine 289, asparagine 295, asparagine 301, asparagine 332, asparagine 339, and asparagine 356. 5 disulfides stabilise this stretch: cysteine 119–cysteine 205, cysteine 126–cysteine 196, cysteine 131–cysteine 157, cysteine 218–cysteine 247, and cysteine 228–cysteine 239. The tract at residues 131-156 (CTDLKNDTNTNSSSGGMIMEKGEIKN) is V1. The interval 157–196 (CSFNISTSIRGKVQKEYAFFYKHDIIPIDNDTTSYTLTSC) is V2. Residues 296–330 (CTRPNNNTRKRIRIQRGPGRTFVTIGKIGNMRQAH) form a V3 region. The cysteines at positions 296 and 331 are disulfide-linked. The tract at residues 364–374 (SSGGDLEIVTH) is CD4-binding loop. Cystine bridges form between cysteine 378-cysteine 445 and cysteine 385-cysteine 418. The interval 385 to 418 (CNSTQLFNSTWFNSTWSTEGSNNTEGSDTITLPC) is V4. N-linked (GlcNAc...) asparagine; by host glycans are attached at residues asparagine 386, asparagine 392, asparagine 397, asparagine 406, asparagine 448, and asparagine 463. V5 regions lie at residues 461–471 (NNNGSEIFRPG) and 463–471 (NGSEIFRPG). Residues 512–532 (AVGIGALFLGFLGAAGSTMGA) form a fusion peptide region. Positions 574–592 (KQLQARILAVERYLKDQQL) are immunosuppression. Cysteines 598 and 604 form a disulfide. 5 N-linked (GlcNAc...) asparagine; by host glycosylation sites follow: asparagine 611, asparagine 616, asparagine 624, asparagine 637, and asparagine 674. Residues 633 to 667 (REINNYTSLIHSLIEESQNQQEKNEQELLELDKWA) are a coiled coil. Positions 662–683 (ELDKWASLWNWFNITNWLWYIK) are MPER; binding to GalCer. A helical transmembrane segment spans residues 685–705 (FIMIVGGLVGLRIVFAVLSIV). Over 706–856 (NRVRQGHSPL…IRQGLERILL (151 aa)) the chain is Cytoplasmic. The tract at residues 715–742 (LSFQTHLPTPGGPDRPEGIEEEGGERDR) is disordered. 2 S-palmitoyl cysteine; by host lipidation sites follow: cysteine 764 and cysteine 837. The short motif at 855–856 (LL) is the Di-leucine internalization motif element.

This sequence belongs to the HIV-1 env protein family. In terms of assembly, the mature envelope protein (Env) consists of a homotrimer of non-covalently associated gp120-gp41 heterodimers. The resulting complex protrudes from the virus surface as a spike. There seems to be as few as 10 spikes on the average virion. Interacts with host CD4, CCR5 and CXCR4. Gp120 also interacts with the C-type lectins CD209/DC-SIGN and CLEC4M/DC-SIGNR (collectively referred to as DC-SIGN(R)). Gp120 and gp41 interact with GalCer. Gp120 interacts with host ITGA4/ITGB7 complex; on CD4+ T-cells, this interaction results in rapid activation of integrin ITGAL/LFA-1, which facilitates efficient cell-to-cell spreading of HIV-1. Gp120 interacts with cell-associated heparan sulfate; this interaction increases virus infectivity on permissive cells and may be involved in infection of CD4- cells. As to quaternary structure, the mature envelope protein (Env) consists of a homotrimer of non-covalently associated gp120-gp41 heterodimers. The resulting complex protrudes from the virus surface as a spike. There seems to be as few as 10 spikes on the average virion. Post-translationally, highly glycosylated by host. The high number of glycan on the protein is reffered to as 'glycan shield' because it contributes to hide protein sequence from adaptive immune system. Palmitoylation of the transmembrane protein and of Env polyprotein (prior to its proteolytic cleavage) is essential for their association with host cell membrane lipid rafts. Palmitoylation is therefore required for envelope trafficking to classical lipid rafts, but not for viral replication. In terms of processing, specific enzymatic cleavages in vivo yield mature proteins. Envelope glycoproteins are synthesized as an inactive precursor that is heavily N-glycosylated and processed likely by host cell furin in the Golgi to yield the mature SU and TM proteins. The cleavage site between SU and TM requires the minimal sequence [KR]-X-[KR]-R. About 2 of the 9 disulfide bonds of gp41 are reduced by P4HB/PDI, following binding to CD4 receptor.

The protein resides in the virion membrane. It is found in the host cell membrane. The protein localises to the host endosome membrane. In terms of biological role, oligomerizes in the host endoplasmic reticulum into predominantly trimers. In a second time, gp160 transits in the host Golgi, where glycosylation is completed. The precursor is then proteolytically cleaved in the trans-Golgi and thereby activated by cellular furin or furin-like proteases to produce gp120 and gp41. Functionally, attaches the virus to the host lymphoid cell by binding to the primary receptor CD4. This interaction induces a structural rearrangement creating a high affinity binding site for a chemokine coreceptor like CXCR4 and/or CCR5. Acts as a ligand for CD209/DC-SIGN and CLEC4M/DC-SIGNR, which are respectively found on dendritic cells (DCs), and on endothelial cells of liver sinusoids and lymph node sinuses. These interactions allow capture of viral particles at mucosal surfaces by these cells and subsequent transmission to permissive cells. HIV subverts the migration properties of dendritic cells to gain access to CD4+ T-cells in lymph nodes. Virus transmission to permissive T-cells occurs either in trans (without DCs infection, through viral capture and transmission), or in cis (following DCs productive infection, through the usual CD4-gp120 interaction), thereby inducing a robust infection. In trans infection, bound virions remain infectious over days and it is proposed that they are not degraded, but protected in non-lysosomal acidic organelles within the DCs close to the cell membrane thus contributing to the viral infectious potential during DCs' migration from the periphery to the lymphoid tissues. On arrival at lymphoid tissues, intact virions recycle back to DCs' cell surface allowing virus transmission to CD4+ T-cells. Its function is as follows. Acts as a class I viral fusion protein. Under the current model, the protein has at least 3 conformational states: pre-fusion native state, pre-hairpin intermediate state, and post-fusion hairpin state. During fusion of viral and target intracellular membranes, the coiled coil regions (heptad repeats) assume a trimer-of-hairpins structure, positioning the fusion peptide in close proximity to the C-terminal region of the ectodomain. The formation of this structure appears to drive apposition and subsequent fusion of viral and target cell membranes. Complete fusion occurs in host cell endosomes and is dynamin-dependent, however some lipid transfer might occur at the plasma membrane. The virus undergoes clathrin-dependent internalization long before endosomal fusion, thus minimizing the surface exposure of conserved viral epitopes during fusion and reducing the efficacy of inhibitors targeting these epitopes. Membranes fusion leads to delivery of the nucleocapsid into the cytoplasm. This Homo sapiens (Human) protein is Envelope glycoprotein gp160.